The following is a 393-amino-acid chain: MTSMRKTHPLLKITNDSFIDLPTPSNISALWNFGSLLGLCLMIQILTGFFLAMHYSAEMSFSFASVTHITRDVGYGWFLRNTHANGASILFICMYLHMGRGLYYGSHLYMETWNIGVIMFFLMMTTAFVGYVLPWGQMSLWGATVITNLLSAAPYSGKNLVQWVWGGFSVDAATLTRFFAIHFTLPFITVGLTMLHLLFLHETGSNNPTGLKTEPDKIPFHPYFSYKDVLGFLLLLAALTALALFAPNILSDPDNFNSANPLITPTHIKPEWYFLYAYAILRSVPNKLGGVAALALSILALMVLPFIHTSKMRSLTFRPLSQLVFWLFVANIAILTWIGGMPVEPPFIIIGRIASVSYFTLILILMPLTGWFENKMLNLNCSWQLKMFRASVL.

A run of 4 helical transmembrane segments spans residues 33–53 (FGSLLGLCLMIQILTGFFLAM), 77–98 (WFLRNTHANGASILFICMYLHM), 113–133 (WNIGVIMFFLMMTTAFVGYVL), and 178–198 (FFAIHFTLPFITVGLTMLHLL). Heme b is bound by residues H83 and H97. Residues H182 and H196 each contribute to the heme b site. H201 is a binding site for a ubiquinone. 4 consecutive transmembrane segments (helical) span residues 226–246 (YKDVLGFLLLLAALTALALFA), 288–308 (LGGVAALALSILALMVLPFIH), 320–340 (LSQLVFWLFVANIAILTWIGG), and 347–367 (FIIIGRIASVSYFTLILILMP).

The protein belongs to the cytochrome b family. In terms of assembly, the cytochrome bc1 complex contains 3 respiratory subunits (MT-CYB, CYC1 and UQCRFS1), 2 core proteins (UQCRC1 and UQCRC2) and probably 6 low-molecular weight proteins. Requires heme b as cofactor.

It is found in the mitochondrion inner membrane. Its function is as follows. Component of the ubiquinol-cytochrome c reductase complex (complex III or cytochrome b-c1 complex) that is part of the mitochondrial respiratory chain. The b-c1 complex mediates electron transfer from ubiquinol to cytochrome c. Contributes to the generation of a proton gradient across the mitochondrial membrane that is then used for ATP synthesis. This chain is Cytochrome b (mt-cyb), found in Synbranchus marmoratus (Marbled swamp eel).